A 382-amino-acid chain; its full sequence is Methylthioribose-1-phosphate isomerase (382 aa).

The active-site Proton donor is the Asp258.

It belongs to the eIF-2B alpha/beta/delta subunits family. MtnA subfamily.

The protein resides in the cytoplasm. It localises to the nucleus. The enzyme catalyses 5-(methylsulfanyl)-alpha-D-ribose 1-phosphate = 5-(methylsulfanyl)-D-ribulose 1-phosphate. It participates in amino-acid biosynthesis; L-methionine biosynthesis via salvage pathway; L-methionine from S-methyl-5-thio-alpha-D-ribose 1-phosphate: step 1/6. In terms of biological role, catalyzes the interconversion of methylthioribose-1-phosphate (MTR-1-P) into methylthioribulose-1-phosphate (MTRu-1-P). The protein is Methylthioribose-1-phosphate isomerase of Laccaria bicolor (strain S238N-H82 / ATCC MYA-4686) (Bicoloured deceiver).